A 396-amino-acid chain; its full sequence is METYDVLVIGGGPGGSTAARYAAKYGLRTLMIEKRPEIGSPVRCGEGLSKGILNEADIKPDKSFIANEVKGARIYGPSEKRPIILQSEKAGNEVGFVLERDKFDKHLAALAAKAGADVWVKSPALGVIKEDGKVAGAKIRHENNVVEVRAKMVIAADGFESEFGRWAGLKSVILARNDIISALQYRMINIDVDPDYTDFYLGSIAPGGYIWVFPKGEGMANVGIGSSINFIHNRLELKNYLDRFIENHPGLKKGQDIQLVTGGVSVSKVKMPITMPGLMLVGDAARLIDPITGGGIANAIVSGMYAAQVSKEAIESNDYSPQMMGKYEKLVKDRFERKHLRNWVAKEKLAQLSDETLDKLVDIVSEQVLTTISVEAILKAIAEKYPEVVKELEDLI.

FAD-binding residues include glycine 14, glutamate 33, cysteine 44, glycine 45, glycine 47, arginine 100, alanine 124, glutamate 162, aspartate 283, glycine 295, and isoleucine 296. Residues lysine 338 and valine 374 each contribute to the a 2,3-bis-O-(geranylgeranyl)-sn-glycerol 1-phospholipid site.

Belongs to the geranylgeranyl reductase family. DGGGPL reductase subfamily. The cofactor is FAD.

The catalysed reaction is 2,3-bis-O-(phytanyl)-sn-glycerol 1-phosphate + 8 NADP(+) = 2,3-bis-O-(geranylgeranyl)-sn-glycerol 1-phosphate + 8 NADPH + 8 H(+). The enzyme catalyses 2,3-bis-O-(phytanyl)-sn-glycerol 1-phosphate + 8 NAD(+) = 2,3-bis-O-(geranylgeranyl)-sn-glycerol 1-phosphate + 8 NADH + 8 H(+). It catalyses the reaction a 2,3-bis-O-phytanyl-sn-glycerol 1-phospholipid + 8 A = a 2,3-bis-O-(geranylgeranyl)-sn-glycerol 1-phospholipid + 8 AH2. It carries out the reaction CDP-2,3-bis-O-(geranylgeranyl)-sn-glycerol + 8 AH2 = CDP-2,3-bis-O-(phytanyl)-sn-glycerol + 8 A. The catalysed reaction is archaetidylserine + 8 AH2 = 2,3-bis-O-phytanyl-sn-glycero-3-phospho-L-serine + 8 A. The protein operates within membrane lipid metabolism; glycerophospholipid metabolism. In terms of biological role, is involved in the reduction of 2,3-digeranylgeranylglycerophospholipids (unsaturated archaeols) into 2,3-diphytanylglycerophospholipids (saturated archaeols) in the biosynthesis of archaeal membrane lipids. Catalyzes the formation of archaetidic acid (2,3-di-O-phytanyl-sn-glyceryl phosphate) from 2,3-di-O-geranylgeranylglyceryl phosphate (DGGGP) via the hydrogenation of each double bond of the isoprenoid chains. Is also probably able to reduce double bonds of geranyl groups in CDP-2,3-bis-O-(geranylgeranyl)-sn-glycerol and archaetidylserine, thus acting at various stages in the biosynthesis of archaeal membrane lipids. This chain is Digeranylgeranylglycerophospholipid reductase, found in Thermoplasma volcanium (strain ATCC 51530 / DSM 4299 / JCM 9571 / NBRC 15438 / GSS1).